The primary structure comprises 138 residues: MRALWIVAVWLIGVEGSVVELGKMIIQETGKSPFPSYTSYGCFCGGGEKGTPKDATDRCCFVHSCCYDKLPDCSPKTDRYKYQRENGEIICENSTSCKKRICECDKAVAVCLRENLQTYNKKYTYYPNFLCKGEPEKC.

Residues 1-16 (MRALWIVAVWLIGVEG) form the signal peptide. 7 disulfide bridges follow: C42–C131, C44–C60, C59–C111, C65–C138, C66–C104, C73–C97, and C91–C102. The interval 121 to 133 (KKYTYYPNFLCKG) is important for membrane-damaging activities in eukaryotes and bacteria; heparin-binding.

It belongs to the phospholipase A2 family. Group II subfamily. S49 sub-subfamily. In terms of assembly, monomer. In terms of tissue distribution, expressed by the venom gland.

The protein localises to the secreted. Functionally, snake venom phospholipase A2 homolog that lacks enzymatic activity. Shows high myotoxin activities and displays edema-inducing activities. Has cytotoxic activities against HUVEC cells (LC(50)=5.0 uL) and human lung adenocarcinoma A549 cells (LC(50)=5.2 uL). The protein is Phospholipase A2 homolog of Echis ocellatus (Ocellated saw-scaled viper).